A 318-amino-acid polypeptide reads, in one-letter code: Mitochondrial thiamine pyrophosphate carrier (318 aa).

3 Solcar repeats span residues 13–106 (NSKL…LTEL), 116–202 (HQFS…LKRA), and 214–309 (TGNL…FCNL). Transmembrane regions (helical) follow at residues 19 to 39 (AVAG…LDVI), 87 to 107 (ILSI…TELL), 122 to 142 (FVCG…VDVL), 173 to 193 (VFYK…GLQF), 220 to 240 (LLCG…LDLF), and 293 to 313 (ALST…FHCI).

Belongs to the mitochondrial carrier (TC 2.A.29) family.

It is found in the mitochondrion membrane. The enzyme catalyses thiamine phosphate(out) + thiamine diphosphate(in) = thiamine phosphate(in) + thiamine diphosphate(out). Functionally, mitochondrial transporter mediating uptake of thiamine diphosphate into mitochondria. It is not clear if the antiporter activity is affected by the membrane potential or by the proton electrochemical gradient. This chain is Mitochondrial thiamine pyrophosphate carrier (Slc25a19), found in Rattus norvegicus (Rat).